Here is a 280-residue protein sequence, read N- to C-terminus: Extracellular metalloprotease GLRG_06286 (280 aa).

The signal sequence occupies residues 1–17 (MQVTFTLVAALAGMASA). Asparagine 51 carries N-linked (GlcNAc...) asparagine glycosylation. Histidine 196 contacts Zn(2+). The active site involves glutamate 197. Histidine 200 lines the Zn(2+) pocket. The segment at 217-236 (DSIADTPAQSSPSSGCPVGR) is disordered. A disulfide bridge links cysteine 232 with cysteine 259.

Belongs to the peptidase M43B family.

It localises to the secreted. Secreted metalloproteinase that allows assimilation of proteinaceous substrates. The sequence is that of Extracellular metalloprotease GLRG_06286 from Colletotrichum graminicola (strain M1.001 / M2 / FGSC 10212) (Maize anthracnose fungus).